A 430-amino-acid polypeptide reads, in one-letter code: CC-adding tRNA nucleotidyltransferase (430 aa).

33 to 36 (GCVR) contributes to the CTP binding site. The Mg(2+) site is built by Asp-46 and Asp-48. CTP is bound by residues 108 to 109 (RD), Asn-113, 150 to 159 (DPLRIVRAYR), and Arg-190.

The protein belongs to the tRNA nucleotidyltransferase/poly(A) polymerase family. Mg(2+) serves as cofactor.

The enzyme catalyses a tRNA precursor + 2 CTP = a tRNA with a 3' CC end + 2 diphosphate. In terms of biological role, tRNA nucleotidyltransferase involved in the synthesis of the tRNA CCA terminus. Adds the two cytidine residues to tRNA. This is CC-adding tRNA nucleotidyltransferase from Geobacter sulfurreducens (strain ATCC 51573 / DSM 12127 / PCA).